We begin with the raw amino-acid sequence, 550 residues long: Probable endochitinase (550 aa).

A signal peptide spans 1–16 (MLHYLATILWLAVAHA). Residues Asn146 and Asn172 are each glycosylated (N-linked (GlcNAc...) asparagine; by host). The GH18 domain occupies 147-547 (KTVAAYFVEW…NAMNERVRVK (401 aa)). Residue Glu304 is the Proton donor of the active site. A glycan (N-linked (GlcNAc...) asparagine; by host) is linked at Asn344. Residues 547–550 (KDEL) carry the Prevents secretion from ER motif.

This sequence belongs to the glycosyl hydrolase 18 family. Chitinase class II subfamily.

It is found in the host endoplasmic reticulum lumen. It carries out the reaction Random endo-hydrolysis of N-acetyl-beta-D-glucosaminide (1-&gt;4)-beta-linkages in chitin and chitodextrins.. The sequence is that of Probable endochitinase from Orgyia pseudotsugata (Douglas-fir tussock moth).